A 120-amino-acid chain; its full sequence is Large ribosomal subunit protein uL18 (120 aa).

Residues Met1–Gly22 are disordered. Basic residues predominate over residues Ser8–Val20.

Belongs to the universal ribosomal protein uL18 family. Part of the 50S ribosomal subunit; part of the 5S rRNA/L5/L18/L25 subcomplex. Contacts the 5S and 23S rRNAs.

In terms of biological role, this is one of the proteins that bind and probably mediate the attachment of the 5S RNA into the large ribosomal subunit, where it forms part of the central protuberance. This Crocosphaera subtropica (strain ATCC 51142 / BH68) (Cyanothece sp. (strain ATCC 51142)) protein is Large ribosomal subunit protein uL18.